The following is a 193-amino-acid chain: p53 apoptosis effector related to PMP-22 (193 aa).

4 helical membrane-spanning segments follow: residues 12–32 (RWIL…ALAG), 81–101 (LFCG…ALCG), 110–130 (VIGG…VIYP), and 151–171 (WAYG…FFFC).

This sequence belongs to the TMEM47 family. Expressed in the stratified squamous skin epithelium of the skin and the tongue, but not in simple epithelia (at protein level). Expressed in the oral epithelium, tongue epithelium and skin (at protein level). More abundant in areas of lower flow stress in the inner curvature compared to the outer curvature regions of the aorta (at protein level). Expressed in luminal cells and myoepithelium cells of the mammary epithelium (at protein level). Expression increases during the early stages of pregnancy before decreasing before birth, expression continues to be weak during involution which mirrors decreased desmosome abundance and organization at these time points (at protein level). Expressed by epithelial cells at the mucosal surface in the proximal colon (at protein level). Expressed in apoptotic cells.

Its subcellular location is the cell junction. The protein resides in the desmosome. It localises to the cell membrane. The protein localises to the cytoplasm. In terms of biological role, component of intercellular desmosome junctions. Plays a role in stratified epithelial integrity and cell-cell adhesion by promoting desmosome assembly. Thereby plays a role in barrier function of the skin against infection. Plays a role in mammary epithelial tissue homeostasis and remodeling during and after pregnancy, potentially via its involvement in desmosome cell-cell junctions. Required for tooth enamel development via facilitating desmosome-mediated ameloblast adhesion to the stratum intermedium during the transitional stage of amelogenesis. May also play a role in downstream transcriptional regulation of other genes involved in amelogenesis such as AMBN, ENAM, MMP20 and KLK4. Plays a role as an effector in the TP53-dependent apoptotic pathway. Positively regulates apoptosis in T-helper 17 (Th17) cell populations via caspase-dependent signaling. Promotes neutrophil transepithelial migration in response to chemoattractants such as hepoxilin A3 (HXA3), N-Formylmethionyl-leucyl-phenylalanine (fMLP) and CXCL8/IL-8. May act as a positive regulator of endothelial cell apoptosis in response to blood flow-derived shear stress. This chain is p53 apoptosis effector related to PMP-22, found in Mus musculus (Mouse).